Consider the following 58-residue polypeptide: Leucine zipper protein 6 (58 aa).

As to expression, widely expressed, highest levels found in brain, placenta, spleen, testis, and ovary. Up-regulated in some tumor cells.

This chain is Leucine zipper protein 6 (LUZP6), found in Homo sapiens (Human).